Here is a 70-residue protein sequence, read N- to C-terminus: Small ribosomal subunit protein bS21 (70 aa).

Belongs to the bacterial ribosomal protein bS21 family.

The protein is Small ribosomal subunit protein bS21 of Chromobacterium violaceum (strain ATCC 12472 / DSM 30191 / JCM 1249 / CCUG 213 / NBRC 12614 / NCIMB 9131 / NCTC 9757 / MK).